A 429-amino-acid polypeptide reads, in one-letter code: GTPase Obg (429 aa).

Residues 1–158 (MFVDQVKIYV…RNVQLELKVL (158 aa)) form the Obg domain. Positions 124 to 145 (RGNKRFATPANPAPELSENGEP) are disordered. The 171-residue stretch at 159-329 (ADVGLVGFPS…LLLAIADKLE (171 aa)) folds into the OBG-type G domain. GTP is bound by residues 165-172 (GFPSVGKS), 190-194 (FTTIV), 212-215 (DLPG), 282-285 (NKMD), and 310-312 (SAV). Mg(2+)-binding residues include Ser-172 and Thr-192. Residues 351–429 (KYVAEEPDFE…LLDYEFEFMD (79 aa)) form the OCT domain.

It belongs to the TRAFAC class OBG-HflX-like GTPase superfamily. OBG GTPase family. In terms of assembly, monomer. Mg(2+) is required as a cofactor.

It localises to the cytoplasm. In terms of biological role, an essential GTPase which binds GTP, GDP and possibly (p)ppGpp with moderate affinity, with high nucleotide exchange rates and a fairly low GTP hydrolysis rate. Plays a role in control of the cell cycle, stress response, ribosome biogenesis and in those bacteria that undergo differentiation, in morphogenesis control. This Listeria monocytogenes serotype 4b (strain F2365) protein is GTPase Obg.